Consider the following 186-residue polypeptide: Elongation factor P (186 aa).

Belongs to the elongation factor P family.

It is found in the cytoplasm. It functions in the pathway protein biosynthesis; polypeptide chain elongation. In terms of biological role, involved in peptide bond synthesis. Stimulates efficient translation and peptide-bond synthesis on native or reconstituted 70S ribosomes in vitro. Probably functions indirectly by altering the affinity of the ribosome for aminoacyl-tRNA, thus increasing their reactivity as acceptors for peptidyl transferase. This is Elongation factor P from Shewanella denitrificans (strain OS217 / ATCC BAA-1090 / DSM 15013).